We begin with the raw amino-acid sequence, 418 residues long: Trans-acting enoyl reductase (418 aa).

The protein belongs to the saccharopine dehydrogenase family. Enoyl reductase subfamily.

Functionally, involved in the reduction of the double bond between C-4 and C-5 during phthiocerol dimycocerosates (DIM A) and glycosylated phenolphthiocerol dimycocerosates (PGL) biosynthesis. The sequence is that of Trans-acting enoyl reductase from Mycobacterium tuberculosis (strain ATCC 25177 / H37Ra).